A 174-amino-acid chain; its full sequence is uncharacterized protein (174 aa).

Residues 78-97 are disordered; the sequence is TFGRNIKTPDISNPTRARNE.

This sequence to yeast YMR295c.

This is an uncharacterized protein from Saccharomyces cerevisiae (strain ATCC 204508 / S288c) (Baker's yeast).